Consider the following 1415-residue polypeptide: Major viral transcription factor ICP4 homolog (1415 aa).

Disordered stretches follow at residues 48 to 272 (MDDD…SSSG), 454 to 480 (DNSSETEKGISSKPSTSPSVLITTSTQ), 691 to 935 (LLND…PSCY), and 1371 to 1415 (QHEE…TFTD). A compositionally biased stretch (polar residues) spans 96 to 105 (PRLTTPSSGR). Residues 125–187 (PETSPSNEHI…LSSPSSSRSP (63 aa)) are compositionally biased toward low complexity. Basic residues predominate over residues 245-255 (GGGRPRGRPPK). Polar residues-rich tracts occupy residues 263–272 (NDIQVTSSSG) and 465–480 (SKPSTSPSVLITTSTQ). Positions 724 to 738 (STSSSQSASDKSPIK) are enriched in low complexity. Composition is skewed to polar residues over residues 814-837 (KAQTDETLPETSTAHPSAMDQSSS) and 895-910 (VGQTLLDPTTTTHDIL). A compositionally biased stretch (low complexity) spans 911–933 (SSSLPNRSCSSSPSPSKRPYHPS).

Belongs to the herpesviridae ICP4 family. Post-translationally, a long stretch of serine residues may be a major site of phosphorylation.

Its subcellular location is the host nucleus. This IE protein is a multifunctional protein capable of migrating to the nucleus, binding to DNA, trans-activating other viral genes, and autoregulating its own synthesis. It is required for the switch from immediate-early to early mode of gene expression. The chain is Major viral transcription factor ICP4 homolog (ICP4) from Gallus gallus (Chicken).